A 119-amino-acid polypeptide reads, in one-letter code: Large ribosomal subunit protein uL22 (119 aa).

Belongs to the universal ribosomal protein uL22 family. As to quaternary structure, part of the 50S ribosomal subunit.

Functionally, this protein binds specifically to 23S rRNA; its binding is stimulated by other ribosomal proteins, e.g. L4, L17, and L20. It is important during the early stages of 50S assembly. It makes multiple contacts with different domains of the 23S rRNA in the assembled 50S subunit and ribosome. In terms of biological role, the globular domain of the protein is located near the polypeptide exit tunnel on the outside of the subunit, while an extended beta-hairpin is found that lines the wall of the exit tunnel in the center of the 70S ribosome. This Pelodictyon phaeoclathratiforme (strain DSM 5477 / BU-1) protein is Large ribosomal subunit protein uL22.